Here is a 437-residue protein sequence, read N- to C-terminus: Protein farnesyltransferase subunit beta (437 aa).

5 PFTB repeats span residues 123 to 164, 174 to 215, 222 to 263, 270 to 312, and 332 to 374; these read ATDV…CIIG, REKL…SLTN, FEGT…VILK, LKSL…PLLH, and QQAL…SIAQ. (2E,6E)-farnesyl diphosphate contacts are provided by residues 248–251 and 291–294; these read HGGY and RCNK. Asp-297 and Cys-299 together coordinate Zn(2+). Residue 300–303 participates in (2E,6E)-farnesyl diphosphate binding; sequence YSFW. His-362 contacts Zn(2+). Residue Thr-436 is modified to Phosphothreonine.

It belongs to the protein prenyltransferase subunit beta family. In terms of assembly, heterodimer of FNTA and FNTB. Requires Zn(2+) as cofactor.

The catalysed reaction is L-cysteinyl-[protein] + (2E,6E)-farnesyl diphosphate = S-(2E,6E)-farnesyl-L-cysteinyl-[protein] + diphosphate. Functionally, essential subunit of the farnesyltransferase complex. Catalyzes the transfer of a farnesyl moiety from farnesyl diphosphate to a cysteine at the fourth position from the C-terminus of several proteins having the C-terminal sequence Cys-aliphatic-aliphatic-X. The protein is Protein farnesyltransferase subunit beta (FNTB) of Bos taurus (Bovine).